Consider the following 221-residue polypeptide: Protein Pisl_1005 (221 aa).

In terms of domain architecture, AMMECR1 spans 8-201 (EEGAYLVKLA…EKTPGGEIYE (194 aa)).

This Pyrobaculum islandicum (strain DSM 4184 / JCM 9189 / GEO3) protein is Protein Pisl_1005.